Reading from the N-terminus, the 257-residue chain is Imidazole glycerol phosphate synthase subunit HisF (257 aa).

Residues aspartate 11 and aspartate 130 contribute to the active site.

This sequence belongs to the HisA/HisF family. Heterodimer of HisH and HisF.

Its subcellular location is the cytoplasm. It catalyses the reaction 5-[(5-phospho-1-deoxy-D-ribulos-1-ylimino)methylamino]-1-(5-phospho-beta-D-ribosyl)imidazole-4-carboxamide + L-glutamine = D-erythro-1-(imidazol-4-yl)glycerol 3-phosphate + 5-amino-1-(5-phospho-beta-D-ribosyl)imidazole-4-carboxamide + L-glutamate + H(+). The protein operates within amino-acid biosynthesis; L-histidine biosynthesis; L-histidine from 5-phospho-alpha-D-ribose 1-diphosphate: step 5/9. Functionally, IGPS catalyzes the conversion of PRFAR and glutamine to IGP, AICAR and glutamate. The HisF subunit catalyzes the cyclization activity that produces IGP and AICAR from PRFAR using the ammonia provided by the HisH subunit. This chain is Imidazole glycerol phosphate synthase subunit HisF, found in Prochlorococcus marinus (strain MIT 9515).